Reading from the N-terminus, the 179-residue chain is ATP synthase subunit delta (179 aa).

It belongs to the ATPase delta chain family. In terms of assembly, F-type ATPases have 2 components, F(1) - the catalytic core - and F(0) - the membrane proton channel. F(1) has five subunits: alpha(3), beta(3), gamma(1), delta(1), epsilon(1). F(0) has three main subunits: a(1), b(2) and c(10-14). The alpha and beta chains form an alternating ring which encloses part of the gamma chain. F(1) is attached to F(0) by a central stalk formed by the gamma and epsilon chains, while a peripheral stalk is formed by the delta and b chains.

Its subcellular location is the cell inner membrane. In terms of biological role, f(1)F(0) ATP synthase produces ATP from ADP in the presence of a proton or sodium gradient. F-type ATPases consist of two structural domains, F(1) containing the extramembraneous catalytic core and F(0) containing the membrane proton channel, linked together by a central stalk and a peripheral stalk. During catalysis, ATP synthesis in the catalytic domain of F(1) is coupled via a rotary mechanism of the central stalk subunits to proton translocation. Its function is as follows. This protein is part of the stalk that links CF(0) to CF(1). It either transmits conformational changes from CF(0) to CF(1) or is implicated in proton conduction. This chain is ATP synthase subunit delta, found in Paraburkholderia phymatum (strain DSM 17167 / CIP 108236 / LMG 21445 / STM815) (Burkholderia phymatum).